The sequence spans 189 residues: Interferon alpha-4 (189 aa).

A signal peptide spans 1-23; sequence MALSFSLLMAVLVLSYKSICSLG. 2 disulfide bridges follow: C24–C122 and C52–C162.

Belongs to the alpha/beta interferon family.

It is found in the secreted. Functionally, produced by macrophages, IFN-alpha have antiviral activities. Interferon stimulates the production of two enzymes: a protein kinase and an oligoadenylate synthetase. The protein is Interferon alpha-4 (IFNA4) of Homo sapiens (Human).